The chain runs to 354 residues: Probable serine acetyltransferase 2 (354 aa).

This sequence belongs to the transferase hexapeptide repeat family. Homomultimer.

The enzyme catalyses L-serine + acetyl-CoA = O-acetyl-L-serine + CoA. It participates in amino-acid biosynthesis; L-cysteine biosynthesis; L-cysteine from L-serine: step 1/2. This chain is Probable serine acetyltransferase 2 (SAT2), found in Oryza sativa subsp. japonica (Rice).